Here is a 352-residue protein sequence, read N- to C-terminus: MSATASVATRHDWSLAEVRALFEQPFNDLLFQAQTVHRAHFDPNRVQVSTLLSIKTGACPEDCKYCPQSGHYNTGLDKEKLMEVQKVLEAAAEAKAIGSTRFCMGAAWKHPSAKDMPYVLEMVKGVKKLGLETCMTLGRLTQEQTQALADAGLDYYNHNLDTSPEFYGNIITTRTYSERLQTLAYVREAGMKICSGGILGMGESVDDRAGLLIQLANLPEHPESVPINMLVKVKGTPLAEEKDVDPFDFIRTLAVARIMMPKSHVRLSAGREQMNEQMQALAFMAGANSIFYGEKLLTTKNPQAEKDMQLFARLGIKPEEREEHADEVHQAAIEQALVEQRESKLFYNAASA.

Residues 44–262 form the Radical SAM core domain; sequence NRVQVSTLLS…LAVARIMMPK (219 aa). C59, C63, and C66 together coordinate [4Fe-4S] cluster. 4 residues coordinate [2Fe-2S] cluster: C103, C134, C194, and R266.

Belongs to the radical SAM superfamily. Biotin synthase family. As to quaternary structure, homodimer. It depends on [4Fe-4S] cluster as a cofactor. The cofactor is [2Fe-2S] cluster.

The catalysed reaction is (4R,5S)-dethiobiotin + (sulfur carrier)-SH + 2 reduced [2Fe-2S]-[ferredoxin] + 2 S-adenosyl-L-methionine = (sulfur carrier)-H + biotin + 2 5'-deoxyadenosine + 2 L-methionine + 2 oxidized [2Fe-2S]-[ferredoxin]. The protein operates within cofactor biosynthesis; biotin biosynthesis; biotin from 7,8-diaminononanoate: step 2/2. In terms of biological role, catalyzes the conversion of dethiobiotin (DTB) to biotin by the insertion of a sulfur atom into dethiobiotin via a radical-based mechanism. The chain is Biotin synthase from Pseudomonas aeruginosa (strain LESB58).